Reading from the N-terminus, the 507-residue chain is ATP synthase subunit alpha, chloroplastic (507 aa).

170 to 177 is an ATP binding site; that stretch reads GDRQTGKT.

This sequence belongs to the ATPase alpha/beta chains family. As to quaternary structure, F-type ATPases have 2 components, CF(1) - the catalytic core - and CF(0) - the membrane proton channel. CF(1) has five subunits: alpha(3), beta(3), gamma(1), delta(1), epsilon(1). CF(0) has four main subunits: a, b, b' and c.

It is found in the plastid. It localises to the chloroplast thylakoid membrane. The catalysed reaction is ATP + H2O + 4 H(+)(in) = ADP + phosphate + 5 H(+)(out). In terms of biological role, produces ATP from ADP in the presence of a proton gradient across the membrane. The alpha chain is a regulatory subunit. The sequence is that of ATP synthase subunit alpha, chloroplastic from Illicium oligandrum (Star anise).